Here is a 235-residue protein sequence, read N- to C-terminus: Small ribosomal subunit protein eS4 (235 aa).

The S4 RNA-binding domain maps to 37–110 (LPLGLIIRDV…KGRLVLYKLN (74 aa)).

Belongs to the eukaryotic ribosomal protein eS4 family.

In Methanosarcina mazei (strain ATCC BAA-159 / DSM 3647 / Goe1 / Go1 / JCM 11833 / OCM 88) (Methanosarcina frisia), this protein is Small ribosomal subunit protein eS4.